We begin with the raw amino-acid sequence, 274 residues long: Undecaprenyl-diphosphatase (274 aa).

Transmembrane regions (helical) follow at residues 40–60 (PGAA…LMFF), 90–110 (WFII…KDVI), 114–134 (FRSL…LGVA), 147–167 (ISLR…IPGV), 190–210 (YAFL…LKDI), 221–241 (PTIV…AWLL), and 252–272 (FVLY…TGVI).

It belongs to the UppP family.

It is found in the cell membrane. It carries out the reaction di-trans,octa-cis-undecaprenyl diphosphate + H2O = di-trans,octa-cis-undecaprenyl phosphate + phosphate + H(+). Functionally, catalyzes the dephosphorylation of undecaprenyl diphosphate (UPP). Confers resistance to bacitracin. This is Undecaprenyl-diphosphatase from Nocardioides sp. (strain ATCC BAA-499 / JS614).